Reading from the N-terminus, the 90-residue chain is Putative regulatory protein Cbei_1140 (90 aa).

Belongs to the RemA family.

The polypeptide is Putative regulatory protein Cbei_1140 (Clostridium beijerinckii (strain ATCC 51743 / NCIMB 8052) (Clostridium acetobutylicum)).